Consider the following 368-residue polypeptide: Decarboxylase yanB (368 aa).

Positions 7, 9, and 159 each coordinate Zn(2+). An N-linked (GlcNAc...) asparagine glycan is attached at Asn-169. Asp-283 is a Zn(2+) binding site. A helical membrane pass occupies residues 339–359; sequence WGAFSACLLLPVGLSALYSVL.

The protein belongs to the metallo-dependent hydrolases superfamily. ACMSD family.

The protein resides in the membrane. The catalysed reaction is 6-methylsalicylate + H(+) = 3-methylphenol + CO2. Its pathway is secondary metabolite biosynthesis; terpenoid biosynthesis. Functionally, decarboxylase; part of the gene cluster that mediates the biosynthesis of yanuthone D, a fungal isoprenoid epoxycyclohexenone that acts as an antibiotic against fungi and bacteria. The first step of the pathway is the synthesis of 6-methylsalicylic acid (6-MSA) by the polyketide synthase yanA. 6-MSA is then converted to m-cresol by the decarboxylase yanB. The cytochrome P450 monooxygenase yanC then catalyzes the oxidation of m-cresol to toluquinol. Epoxidation of toluquinol is then performed by the short chain dehydrogenase yanD, with the help of yanE, and a further prenylation by yanG leads to 7-deacetoxyyanuthone A. The next step is the hydroxylation of C-22 of 7-deacetoxyyanuthone A by the cytochrome P450 monooxygenase yanH to yield 22-deacetylyanuthone A. O-Mevalon transferase yanI then attaches mevalon to the hydroxyl group of 22-deacetylyanuthone A to produce yanuthone E. Finally, the FAD-dependent monooxygenase yanF oxidizes the hydroxyl group at C15 of yanuthone E to form yanuthone D. Furthermore, several branching points in the pathway lead to the production of yanuthones F and G from 7-deacetoxyyanuthone A; yanuthones H and I from 22-deacetylyanuthone A; and yanuthone J from yanuthone E. This is Decarboxylase yanB from Aspergillus niger (strain ATCC 1015 / CBS 113.46 / FGSC A1144 / LSHB Ac4 / NCTC 3858a / NRRL 328 / USDA 3528.7).